We begin with the raw amino-acid sequence, 268 residues long: GTP cyclohydrolase FolE2 (268 aa).

This sequence belongs to the GTP cyclohydrolase IV family.

It catalyses the reaction GTP + H2O = 7,8-dihydroneopterin 3'-triphosphate + formate + H(+). It functions in the pathway cofactor biosynthesis; 7,8-dihydroneopterin triphosphate biosynthesis; 7,8-dihydroneopterin triphosphate from GTP: step 1/1. In terms of biological role, converts GTP to 7,8-dihydroneopterin triphosphate. The sequence is that of GTP cyclohydrolase FolE2 from Janthinobacterium sp. (strain Marseille) (Minibacterium massiliensis).